The chain runs to 195 residues: Triosephosphate isomerase, cytosolic (195 aa).

Catalysis depends on His-37, which acts as the Electrophile. Glu-107 (proton acceptor) is an active-site residue.

The protein belongs to the triosephosphate isomerase family. As to quaternary structure, homodimer.

The protein localises to the cytoplasm. It catalyses the reaction D-glyceraldehyde 3-phosphate = dihydroxyacetone phosphate. It participates in carbohydrate biosynthesis; gluconeogenesis. It functions in the pathway carbohydrate degradation; glycolysis; D-glyceraldehyde 3-phosphate from glycerone phosphate: step 1/1. The polypeptide is Triosephosphate isomerase, cytosolic (Lactuca sativa (Garden lettuce)).